The sequence spans 205 residues: CASP-like protein 2A1 (205 aa).

Residues 1 to 35 (MMGDKGEKECATASSPIELGCGEGDESGNKSSMRT) lie on the Cytoplasmic side of the membrane. The helical transmembrane segment at 36–56 (VETLLRLVPVALCTVSLVVML) threads the bilayer. Residues 57-77 (KNSQTNDFGSLSYSDLGAFRY) lie on the Extracellular side of the membrane. A helical membrane pass occupies residues 78 to 98 (LVHANGICAGYSLLSAIFTAM). Topologically, residues 99-106 (PRPPTMSR) are cytoplasmic. A helical transmembrane segment spans residues 107–127 (AWTFFLLDQVLTYLILAAGAV). Topologically, residues 128–157 (STEVVYLAYKGDEAVTWSDACSSFGGFCQK) are extracellular. The helical transmembrane segment at 158-178 (TTASISITFVTVLCYAVLSLI) threads the bilayer. Topologically, residues 179-205 (SSYKLFSKYDAPICFNGKGIEIAAFHS) are cytoplasmic.

The protein belongs to the Casparian strip membrane proteins (CASP) family. In terms of assembly, homodimer and heterodimers.

Its subcellular location is the cell membrane. This chain is CASP-like protein 2A1, found in Vitis vinifera (Grape).